The chain runs to 268 residues: Universal stress protein MT3220 (268 aa).

Residues Gly13, 107–113, Arg117, and 120–121 contribute to the ATP site; these read GSVGLDH and SV.

The protein belongs to the universal stress protein A family.

The sequence is that of Universal stress protein MT3220 from Mycobacterium tuberculosis (strain CDC 1551 / Oshkosh).